The sequence spans 263 residues: 3-oxo-5-alpha-steroid 4-dehydrogenase 1 (263 aa).

Helical transmembrane passes span 16–33, 90–110, 115–135, 155–175, and 213–233; these read MLAA…AVLA, ILLA…PFLM, PMPL…GYLQ, FLIG…SDHI, and YALA…FCFL.

The protein belongs to the steroid 5-alpha reductase family.

The protein resides in the microsome membrane. Its subcellular location is the endoplasmic reticulum membrane. It catalyses the reaction a 3-oxo-5alpha-steroid + NADP(+) = a 3-oxo-Delta(4)-steroid + NADPH + H(+). It carries out the reaction 5alpha-pregnane-3,20-dione + NADP(+) = progesterone + NADPH + H(+). The enzyme catalyses 17beta-hydroxy-5alpha-androstan-3-one + NADP(+) = testosterone + NADPH + H(+). The catalysed reaction is androst-4-ene-3,17-dione + NADPH + H(+) = 5alpha-androstan-3,17-dione + NADP(+). Converts testosterone into 5-alpha-dihydrotestosterone and progesterone or corticosterone into their corresponding 5-alpha-3-oxosteroids. It plays a central role in sexual differentiation and androgen physiology. This chain is 3-oxo-5-alpha-steroid 4-dehydrogenase 1 (SRD5A1), found in Macaca fascicularis (Crab-eating macaque).